Here is a 43-residue protein sequence, read N- to C-terminus: Venom protein E2 (43 aa).

Intrachain disulfides connect cysteine 3–cysteine 20 and cysteine 14–cysteine 39.

In terms of tissue distribution, expressed by the venom gland.

It localises to the secreted. Neurotoxin. Blocks muscular nicotinic acetylcholine receptors (nAChR). In Micrurus pyrrhocryptus (Coral snake), this protein is Venom protein E2.